Here is a 1275-residue protein sequence, read N- to C-terminus: Probable Rho-type GTPase-activating protein 2 (1275 aa).

Disordered stretches follow at residues 118–146 (KYES…SPYE), 213–238 (NTKR…LKDS), 280–306 (SSFR…KDNN), and 335–365 (SSPR…SKSG). The span at 122–143 (TDSFPSSQPSRANSPQSDSYSS) shows a compositional bias: polar residues. Composition is skewed to polar residues over residues 290-299 (TPFNSDSNIS) and 353-364 (PKHSTNNLSSKS). Phosphoserine is present on serine 388. Disordered regions lie at residues 390 to 466 (IIEN…RSSF) and 539 to 561 (FSKS…SNSK). 2 stretches are compositionally biased toward polar residues: residues 450–466 (SLSL…RSSF) and 552–561 (QVEKSTSNSK). The 118-residue stretch at 719–836 (HAQKEGVLLK…WLRAILRQVP (118 aa)) folds into the PH domain. A compositionally biased stretch (basic and acidic residues) spans 957–971 (ADTRRNQDAPEKHVP). 2 disordered regions span residues 957–988 (ADTR…TDQS) and 1254–1275 (NGAQ…NEFF). One can recognise a Rho-GAP domain in the interval 1065-1275 (LPLNEAVNIS…DDNGEDNEFF (211 aa)). Over residues 1260–1275 (SDSDVSDDNGEDNEFF) the composition is skewed to acidic residues.

Its subcellular location is the nucleus. GTPase-activating protein for Rho-type proteins. In Schizosaccharomyces pombe (strain 972 / ATCC 24843) (Fission yeast), this protein is Probable Rho-type GTPase-activating protein 2 (rga2).